The primary structure comprises 382 residues: Succinate--CoA ligase [ADP-forming] subunit beta (382 aa).

One can recognise an ATP-grasp domain in the interval 9–240 (KELLKKYGLP…ITQIDPLEVE (232 aa)). ATP is bound by residues Lys-46, Glu-98, Thr-101, and Glu-106. Positions 195 and 209 each coordinate Mg(2+). Substrate contacts are provided by residues Asn-260 and 317–319 (GIL).

It belongs to the succinate/malate CoA ligase beta subunit family. As to quaternary structure, heterotetramer of two alpha and two beta subunits. It depends on Mg(2+) as a cofactor.

It catalyses the reaction succinate + ATP + CoA = succinyl-CoA + ADP + phosphate. The catalysed reaction is GTP + succinate + CoA = succinyl-CoA + GDP + phosphate. The protein operates within carbohydrate metabolism; tricarboxylic acid cycle; succinate from succinyl-CoA (ligase route): step 1/1. Succinyl-CoA synthetase functions in the citric acid cycle (TCA), coupling the hydrolysis of succinyl-CoA to the synthesis of either ATP or GTP and thus represents the only step of substrate-level phosphorylation in the TCA. The beta subunit provides nucleotide specificity of the enzyme and binds the substrate succinate, while the binding sites for coenzyme A and phosphate are found in the alpha subunit. This chain is Succinate--CoA ligase [ADP-forming] subunit beta, found in Hydrogenobaculum sp. (strain Y04AAS1).